The sequence spans 1390 residues: Nuclear pore complex protein 14 (1390 aa).

2 stretches are compositionally biased toward polar residues: residues 434–455 (SQKP…STVF) and 464–521 (LKSS…STPK). Disordered stretches follow at residues 434–530 (SQKP…KISD), 851–874 (PSSS…TQAD), and 985–1118 (QEIE…SKAA). Over residues 851 to 864 (PSSSLFSASPSTPS) the composition is skewed to low complexity. A compositionally biased stretch (basic and acidic residues) spans 986–1033 (EIEKASSKVETLNKTEEVKDEKSENEVTPDLKSEEPKSLETKVKEEPK). Positions 1051–1071 (KTPSFSFNSTTTPKSTSSTSS) are enriched in low complexity. Copy 1 of the repeat occupies 1073 to 1074 (FG). Residues 1073–1373 (FGGGLKTQTP…TPAPTSSVFG (301 aa)) form a 17 X 2 AA repeats of F-G region. Positions 1078–1090 (KTQTPSSSNSTNI) are enriched in polar residues. Repeat 2 spans residues 1091–1092 (FG). A compositionally biased stretch (low complexity) spans 1095 to 1109 (TTTTATPTPASNTSS). Repeat copies occupy residues 1111–1112 (FG), 1122–1123 (FG), 1125–1126 (FG), 1163–1164 (FG), 1166–1167 (FG), and 1178–1179 (FG). The disordered stretch occupies residues 1183 to 1280 (TAPTVPNVDD…QASAPATGTS (98 aa)). Over residues 1201–1210 (NGGGSGGFMS) the composition is skewed to gly residues. Low complexity predominate over residues 1231-1243 (TSTGTSASSSSWL). Repeat 9 spans residues 1244–1245 (FG). A compositionally biased stretch (low complexity) spans 1264–1280 (TAGSSAQQASAPATGTS). A run of 8 repeats spans residues 1283-1284 (FG), 1289-1290 (FG), 1295-1296 (FG), 1300-1301 (FG), 1315-1316 (FG), 1344-1345 (FG), 1357-1358 (FG), and 1372-1373 (FG). The span at 1342–1371 (SLFGGGATPQTNTSIFGGGANTTPAPTSSV) shows a compositional bias: polar residues. The disordered stretch occupies residues 1342 to 1390 (SLFGGGATPQTNTSIFGGGANTTPAPTSSVFGGGASANANKPTSFTSWR). Polar residues predominate over residues 1378-1390 (ANANKPTSFTSWR).

As to quaternary structure, interacts with caspase ced-3 (via propeptide); the interaction tethers ced-3 to the nuclear membrane and prevents its autoprocessing in absence of ced-4.

It is found in the nucleus. The protein resides in the nuclear pore complex. It localises to the nucleus membrane. In terms of biological role, may serve as a docking site in the receptor-mediated import of substrates across the nuclear pore complex. Plays a role in apoptosis by tethering caspase ced-3 to the nuclear membrane preventing its autoprocessing in absence of ced-4. The polypeptide is Nuclear pore complex protein 14 (Caenorhabditis elegans).